The sequence spans 70 residues: Insulin (70 aa).

3 disulfide bridges follow: Cys7–Cys56, Cys19–Cys69, and Cys55–Cys60. The propeptide at Phe33–Ser49 is c peptide.

Belongs to the insulin family. In terms of assembly, heterodimer of a B chain and an A chain linked by two disulfide bonds.

Its subcellular location is the secreted. In terms of biological role, insulin decreases blood glucose concentration. It increases cell permeability to monosaccharides, amino acids and fatty acids. It accelerates glycolysis, the pentose phosphate cycle, and glycogen synthesis in liver. In Torpedo marmorata (Marbled electric ray), this protein is Insulin (ins).